The primary structure comprises 125 residues: Hydrogenase maturation factor HypA (125 aa).

His-2 is a binding site for Ni(2+). Positions 73, 76, 96, and 99 each coordinate Zn(2+).

This sequence belongs to the HypA/HybF family.

Functionally, involved in the maturation of [NiFe] hydrogenases. Required for nickel insertion into the metal center of the hydrogenase. This chain is Hydrogenase maturation factor HypA, found in Methanobrevibacter smithii (strain ATCC 35061 / DSM 861 / OCM 144 / PS).